A 301-amino-acid polypeptide reads, in one-letter code: Sulfate adenylyltransferase subunit 2 (301 aa).

The segment at 278–301 (ERQGRLIDGDEPASMERKKREGYF) is disordered.

This sequence belongs to the PAPS reductase family. CysD subfamily. In terms of assembly, sulfate-activating enzymes, NodP and NodQ, may be physically associated.

It carries out the reaction sulfate + ATP + H(+) = adenosine 5'-phosphosulfate + diphosphate. In terms of biological role, proposed to provide activated sulfate for transfer to nod factor. The protein is Sulfate adenylyltransferase subunit 2 (nodP) of Azospirillum brasilense.